A 404-amino-acid polypeptide reads, in one-letter code: uncharacterized protein (404 aa).

Disordered regions lie at residues 261 to 307 and 320 to 340; these read VSTG…SPSL and KKSH…GGAD. Phosphoserine occurs at positions 267, 276, and 279. Phosphothreonine occurs at positions 290 and 293. Residues Ser304, Ser306, Ser324, Ser358, and Ser362 each carry the phosphoserine modification. The span at 320–336 shows a compositional bias: basic and acidic residues; sequence KKSHSANDSEEFFREDD.

This is an uncharacterized protein from Homo sapiens (Human).